The following is a 310-amino-acid chain: 5'-adenylylsulfate reductase-like 4 (310 aa).

The N-terminal stretch at 1-22 (MEKEILLLLLVIMFLTVADVDA) is a signal peptide. In terms of domain architecture, Thioredoxin spans 49-168 (GVESDERPRF…LVAFYSDVTG (120 aa)). Asparagine 143 and asparagine 190 each carry an N-linked (GlcNAc...) asparagine glycan. Residues 217–237 (LAIVFVLLRLLHLIYPTLVVF) form a helical membrane-spanning segment.

It is found in the membrane. This chain is 5'-adenylylsulfate reductase-like 4 (APRL4), found in Arabidopsis thaliana (Mouse-ear cress).